Here is a 484-residue protein sequence, read N- to C-terminus: Falcipain-2a (484 aa).

Residues 1-35 (MDYNMDYAPHEVISQQGERFVDKYVDRKILKNKKS) lie on the Cytoplasmic side of the membrane. Residues 1–243 (MDYNMDYAPH…PLKNSKYLLD (243 aa)) constitute a propeptide, activation peptide. Positions 16–25 (QGERFVDKYV) match the Bipartite vacuolar targeting signal 1 motif. A helical; Signal-anchor for type II membrane protein membrane pass occupies residues 36 to 56 (LLVIISLSVLSVVGFVLFYFT). Residues 57-484 (PNSRKSDLFK…GTDAFIPLIE (428 aa)) are Lumenal-facing. N67 is a glycosylation site (N-linked (GlcNAc...) asparagine). A Bipartite vacuolar targeting signal 2 motif is present at residues 84–105 (KSPNGKKFIVSKIDEALSFYDS). The Nose motif; required for the correct folding of the mature form signature appears at 244–260 (QMNYEEVIKKYKGNENF). 4 disulfide bridges follow: C282/C323, C316/C357, C342/C362, and C411/C472. Residue C285 is part of the active site. The active site involves H417. The Arm motif; binds to host hemoglobin and required for the inhibitory interaction between the propeptide and the catalytic domain motif lies at 428–437 (EIVNPLTKKG). N447 is an active-site residue.

Belongs to the peptidase C1 family. As to quaternary structure, component of the hemozoin formation complex (HFC) composed of falcipains FP2A and/or FP2B, plasmepsins PMII, PMIII/HAP and PMIV, heme detoxifying protein HDP and falcilysin FLN. The HFC complex is involved in hemoglobin degradation and detoxification of heme in the food vacuole during the asexual blood stage. Auto-cleaved to remove the propeptide.

The protein resides in the vacuole. The protein localises to the membrane. Its activity is regulated as follows. Inhibited by cysteine protease inhibitor ICP. Inhibited by heme and heme analogs. Its function is as follows. Cysteine protease which cleaves native host hemoglobin and globin in the food vacuole during the asexual blood stage. The binding to host hemoglobin is pH-sensitive and only occurs at acidic pH. Cleaves ankyrin and protein 4.1, two components of host erythrocyte membrane cytoskeleton required for the stability of the erythrocyte membrane, and thus may be involved in parasite release. Preferentially cleaves substrates which have an arginine or lysine at the P1 position and a leucine or phenylalanine at the P2 position. In Plasmodium falciparum (isolate 3D7), this protein is Falcipain-2a.